A 404-amino-acid polypeptide reads, in one-letter code: Metacaspase-1A (404 aa).

Over residues 1 to 10 (MNPHHSHHHS) the composition is skewed to basic residues. The disordered stretch occupies residues 1 to 100 (MNPHHSHHHS…PSDPVSFGQG (100 aa)). Low complexity predominate over residues 24-51 (QQQPPSNPYQYNQPSPQPYQGSQPPQNG). Active-site residues include His200 and Cys256.

Belongs to the peptidase C14B family.

Its function is as follows. Involved in cell death (apoptosis). This Aspergillus niger (strain ATCC MYA-4892 / CBS 513.88 / FGSC A1513) protein is Metacaspase-1A (casA).